Here is a 777-residue protein sequence, read N- to C-terminus: Phosphate transporter PHO1 homolog 10 (777 aa).

The region spanning 1–322 is the SPX domain; sequence MKFGKIFKKQ…SRNASRNYMK (322 aa). Over 1 to 372 the chain is Cytoplasmic; that stretch reads MKFGKIFKKQ…RPKVKRERHR (372 aa). The chain crosses the membrane as a helical span at residues 373–393; that stretch reads VTFFSGFFSGCSIALVIAVVF. The Extracellular segment spans residues 394–408; it reads KIESRKIMEKNYGTE. Residues 409-429 traverse the membrane as a helical segment; that stretch reads YMANIIPLYSLFGFIILHMLM. The Cytoplasmic portion of the chain corresponds to 430–459; the sequence is YSANIYFWKRYRVNYTFIFGFKQGTELGDR. The helical transmembrane segment at 460–480 threads the bilayer; it reads EVFLVSTGLAVLAFVCFLLNL. Residues 481-496 are Extracellular-facing; sequence QLDMDWRMKHHKTLPE. The helical transmembrane segment at 497–517 threads the bilayer; that stretch reads VIPLCLATIVLFILFCPFNII. The Cytoplasmic portion of the chain corresponds to 518 to 646; the sequence is YRSSRFFFIR…YELKKGRTWM (129 aa). One can recognise an EXS domain in the interval 581–775; the sequence is HSHGVYNAFY…HYYDDDDVDK (195 aa). The helical transmembrane segment at 647–667 threads the bilayer; the sequence is ILALVSSGVATGMNTFWDIVI. Topologically, residues 668-691 are extracellular; sequence DWGLLRKHSKNPYLRDKLLVPHKS. The chain crosses the membrane as a helical span at residues 692-712; sequence VYFAAMVVNVILRVAWMQLVL. The Cytoplasmic portion of the chain corresponds to 713–777; the sequence is EFNLKSLHKI…YDDDDVDKDD (65 aa).

The protein belongs to the SYG1 (TC 2.A.94) family. As to expression, expressed in root epidermis and cortex, leaf blades and hydathodes, stems and flowers.

Its subcellular location is the cell membrane. In terms of biological role, may transport inorganic phosphate (Pi). The protein is Phosphate transporter PHO1 homolog 10 (PHO1-H10) of Arabidopsis thaliana (Mouse-ear cress).